The primary structure comprises 358 residues: MARLLLLLVGVLIACAAGARAGSEFLAEDNPIRQVVDGMHELESSILKAVGNSRRAFSFARFAHRYGKSYESSEEIQKRFQVYSENLRMIRSHNKKGLSYSMGVNEFSDLTWDEFKKHRLGAAQNCSATRRGNHKLTSAILPDSKDWRESGIVSPVKSQGSCGSCWTFSSTGALEAAYAQAFGKGISLSEQQLVDCAGAFNNFGCNGGLPSQAFEYIKYNGGLMTEEAYPYTGHDGECKYSSENAAVQVLDSVNITLGAEDELKHAVALVRPVSVAFEVVDGFRSYNGGVYTSTTCGSDPMDVNHAVLAVGYGVEGGVPYWLIKNSWGADWGDQGYFKMEMGKNMCGVATCASYPVVA.

The N-terminal stretch at 1–21 (MARLLLLLVGVLIACAAGARA) is a signal peptide. The propeptide at 22-140 (GSEFLAEDNP…RGNHKLTSAI (119 aa)) is activation peptide. N125 carries N-linked (GlcNAc...) asparagine glycosylation. 2 disulfides stabilise this stretch: C162–C205 and C196–C238. C165 is an active-site residue. An N-linked (GlcNAc...) asparagine glycan is attached at N254. A disulfide bridge links C296 with C346. Active-site residues include H305 and N325.

This sequence belongs to the peptidase C1 family.

It carries out the reaction (E)-ferulate + H2O = vanillin + acetate. The enzyme catalyses 4-O-beta-D-glucosyl-trans-ferulate + H2O = 4-O-beta-D-glucosyl-vanillin + acetate. The protein operates within aromatic compound metabolism; phenylpropanoid biosynthesis. In terms of biological role, involved in the biosynthesis of vanillin and derivative natural products. Catalyzes the double carbon bond cleavage of ferulic acid to vanillin and of respective glucosides. In Glechoma hederacea (Ground-ivy), this protein is Vanillin synthase.